Reading from the N-terminus, the 120-residue chain is uncharacterized protein (120 aa).

Residues 8–28 traverse the membrane as a helical segment; it reads LIVKWFVGLMLIMMMVAVSLF.

It localises to the membrane. This is an uncharacterized protein from Bacillus anthracis.